Consider the following 147-residue polypeptide: Nucleoside diphosphate kinase (147 aa).

ATP-binding residues include lysine 9, phenylalanine 57, arginine 85, threonine 91, arginine 102, and asparagine 112. Catalysis depends on histidine 115, which acts as the Pros-phosphohistidine intermediate.

It belongs to the NDK family. Homotetramer. Requires Mg(2+) as cofactor.

It localises to the cytoplasm. It carries out the reaction a 2'-deoxyribonucleoside 5'-diphosphate + ATP = a 2'-deoxyribonucleoside 5'-triphosphate + ADP. The enzyme catalyses a ribonucleoside 5'-diphosphate + ATP = a ribonucleoside 5'-triphosphate + ADP. In terms of biological role, major role in the synthesis of nucleoside triphosphates other than ATP. The ATP gamma phosphate is transferred to the NDP beta phosphate via a ping-pong mechanism, using a phosphorylated active-site intermediate. The chain is Nucleoside diphosphate kinase from Listeria innocua serovar 6a (strain ATCC BAA-680 / CLIP 11262).